Reading from the N-terminus, the 450-residue chain is Phosphoglucosamine mutase (450 aa).

Catalysis depends on serine 103, which acts as the Phosphoserine intermediate. Mg(2+) is bound by residues serine 103, aspartate 243, aspartate 245, and aspartate 247. Serine 103 bears the Phosphoserine mark.

Belongs to the phosphohexose mutase family. Mg(2+) is required as a cofactor. Activated by phosphorylation.

The enzyme catalyses alpha-D-glucosamine 1-phosphate = D-glucosamine 6-phosphate. Functionally, catalyzes the conversion of glucosamine-6-phosphate to glucosamine-1-phosphate. The polypeptide is Phosphoglucosamine mutase (Lactobacillus delbrueckii subsp. bulgaricus (strain ATCC 11842 / DSM 20081 / BCRC 10696 / JCM 1002 / NBRC 13953 / NCIMB 11778 / NCTC 12712 / WDCM 00102 / Lb 14)).